The primary structure comprises 197 residues: Probable 26S proteasome non-ATPase regulatory subunit 9 (197 aa).

One can recognise a PDZ domain in the interval 75–166 (KIVVEMENEN…KIIRVTVIRE (92 aa)).

Belongs to the proteasome subunit p27 family.

Its function is as follows. Acts as a chaperone during the assembly of the 26S proteasome, specifically of the base subcomplex of the 19S regulatory complex (RC). The polypeptide is Probable 26S proteasome non-ATPase regulatory subunit 9 (psmd-9) (Caenorhabditis elegans).